The chain runs to 338 residues: Trace amine-associated receptor 1 (338 aa).

Topologically, residues 1–24 (MPFCHNIINISCVKNNWSNDVRAS) are extracellular. Intrachain disulfides connect C4-C177, C12-C87, and C95-C181. N-linked (GlcNAc...) asparagine glycosylation is found at N9 and N16. Residues 25–45 (LYSLMALIILTTLVGNLIVIV) traverse the membrane as a helical segment. Residues 46–58 (SISHFKQLHTPTN) lie on the Cytoplasmic side of the membrane. The chain crosses the membrane as a helical span at residues 59–79 (WLIHSMATVDFLLGCLVMPYS). The Extracellular portion of the chain corresponds to 80–97 (MVRSAEHCWYFGEVFCKI). The chain crosses the membrane as a helical span at residues 98-118 (HTSTDIMLSSASIFHLSFISI). D102 serves as a coordination point for 2-phenylethylamine. Topologically, residues 119 to 135 (DRYYAVCDPLRYKAKIN) are cytoplasmic. A helical transmembrane segment spans residues 136 to 156 (ILVVCVMIFISWSVPAVFAFG). The Extracellular portion of the chain corresponds to 157-187 (MIFLELNFKGAEEIYYKHVHCRGGCSVFFSK). Residues 188-208 (ISGVLAFMTSFYIPGSIMLCI) traverse the membrane as a helical segment. The Cytoplasmic portion of the chain corresponds to 209–251 (YYRIYLIAKEQARSINDANQKLQIGLEMKNGISQSKERKAVKT). Residues 252 to 272 (LGIVMGVFLICWCPFFVCTVI) traverse the membrane as a helical segment. Over 273 to 286 (DPFLHYTIPPTLND) the chain is Extracellular. Residues 287-307 (VLIWFGYLNSTFNPMVYAFFY) traverse the membrane as a helical segment. Topologically, residues 308-338 (PWFRKALKMILFGKIFQKDSSRCKLFLESSS) are cytoplasmic.

This sequence belongs to the G-protein coupled receptor 1 family.

It is found in the endomembrane system. It localises to the endoplasmic reticulum membrane. The protein resides in the cell membrane. Its function is as follows. Intracellular G-protein coupled receptor for trace amines, which recognizes endogenous amine-containing metabolites such as beta-phenylethylamine (beta-PEA), 3-iodothyronamine (T1AM), isoamylamine (IAA), cadaverine (CAD), cyclohexylamine (CHA), p-tyramine (p-TYR), trimethylamine (TMA), octopamine and tryptamine. Also functions as a receptor for various drugs and psychoactive substances, such as amphetamine and methamphetamine. Unresponsive to classical biogenic amines, such as epinephrine and histamine and only partially activated by dopamine and serotonin. Expressed in both the central and peripheral nervous system: TAAR1 activation regulates the activity of several neurotransmitter signaling pathways by (1) decreasing the basal firing rates of the neurons involved and by (2) lowering the sensitivity of receptors to neurotransmitters. Ligand binding causes a conformation change that triggers signaling via guanine nucleotide-binding proteins (G proteins) and modulates the activity of downstream effectors. TAAR1 is coupled with different G(i)/G(o)-, G(s)- or G(q)/G(11) classes of G alpha proteins depending on the ligand. CAD-binding is coupled to G(i)/G(o) G alpha proteins and mediates inhibition of adenylate cyclase activity. T1AM- or beta-PEA-binding is coupled to G(s) G alpha proteins and mediates activation of adenylate cyclase activity. CHA- or IAA-binding is coupled to G(q)/G(11) G alpha proteins and activates phospholipase C-beta, releasing diacylglycerol (DAG) and inositol 1,4,5-trisphosphate (IP3) second messengers. TMA-binding is coupled with all three G(i)/G(o)-, G(s)- or G(q)/G(11) G alpha protein subtypes. The sequence is that of Trace amine-associated receptor 1 (TAAR1) from Macaca mulatta (Rhesus macaque).